We begin with the raw amino-acid sequence, 445 residues long: Guanosine nucleotide diphosphate dissociation inhibitor 1 (445 aa).

The protein belongs to the Rab GDI family. In terms of assembly, interacts with the GDP-bound form of RABA5C (via C-terminus). In terms of tissue distribution, expressed in roots, rosette leaves, stems, floral buds and siliques.

Functionally, regulates the GDP/GTP exchange reaction of most RAB proteins by inhibiting the dissociation of GDP from them, and the subsequent binding of GTP. This Arabidopsis thaliana (Mouse-ear cress) protein is Guanosine nucleotide diphosphate dissociation inhibitor 1 (GDI1).